The primary structure comprises 260 residues: Methylesterase 7 (260 aa).

Ser-84 serves as the catalytic Acyl-ester intermediate. Residues Asp-210 and His-238 each act as charge relay system in the active site.

Belongs to the AB hydrolase superfamily. Methylesterase family.

It catalyses the reaction methyl (indol-3-yl)acetate + H2O = (indol-3-yl)acetate + methanol + H(+). The enzyme catalyses methyl salicylate + H2O = salicylate + methanol + H(+). It participates in plant hormone biosynthesis. Its activity is regulated as follows. Esterase activity is down-regulated by salicylic acid (SA). Methylesterase shown to have carboxylesterase activity, methyl indole-3-acetic acid (MeIAA) esterase activity and methyl salicylate (MeSA) esterase activity in vitro. Required to convert methyl salicylate (MeSA) to salicylic acid (SA) as part of the signal transduction pathways that activate systemic acquired resistance in systemic tissue. MeSA is believed to be an inactive form that needs to be demethylated to exert a biological effect. This chain is Methylesterase 7, found in Arabidopsis thaliana (Mouse-ear cress).